A 452-amino-acid polypeptide reads, in one-letter code: UDP-glycosyltransferase 76D1 (452 aa).

Residues serine 269, 329-331 (APQ), 346-354 (HGGWNSCLE), and 368-371 (SGDQ) contribute to the UDP-alpha-D-glucose site.

It belongs to the UDP-glycosyltransferase family.

Its function is as follows. Possesses low quercetin 7-O-glucosyltransferase activity in vitro. This chain is UDP-glycosyltransferase 76D1 (UGT76D1), found in Arabidopsis thaliana (Mouse-ear cress).